Consider the following 209-residue polypeptide: Thiamine-phosphate synthase (209 aa).

4-amino-2-methyl-5-(diphosphooxymethyl)pyrimidine contacts are provided by residues 40–44 (QLREK) and Asn72. Mg(2+)-binding residues include Asp73 and Asp92. Residue Ser111 coordinates 4-amino-2-methyl-5-(diphosphooxymethyl)pyrimidine. 137–139 (TNS) contributes to the 2-[(2R,5Z)-2-carboxy-4-methylthiazol-5(2H)-ylidene]ethyl phosphate binding site. Residue Lys140 coordinates 4-amino-2-methyl-5-(diphosphooxymethyl)pyrimidine. Residues Gly167 and 187–188 (IS) each bind 2-[(2R,5Z)-2-carboxy-4-methylthiazol-5(2H)-ylidene]ethyl phosphate.

The protein belongs to the thiamine-phosphate synthase family. It depends on Mg(2+) as a cofactor.

The catalysed reaction is 2-[(2R,5Z)-2-carboxy-4-methylthiazol-5(2H)-ylidene]ethyl phosphate + 4-amino-2-methyl-5-(diphosphooxymethyl)pyrimidine + 2 H(+) = thiamine phosphate + CO2 + diphosphate. It carries out the reaction 2-(2-carboxy-4-methylthiazol-5-yl)ethyl phosphate + 4-amino-2-methyl-5-(diphosphooxymethyl)pyrimidine + 2 H(+) = thiamine phosphate + CO2 + diphosphate. The enzyme catalyses 4-methyl-5-(2-phosphooxyethyl)-thiazole + 4-amino-2-methyl-5-(diphosphooxymethyl)pyrimidine + H(+) = thiamine phosphate + diphosphate. The protein operates within cofactor biosynthesis; thiamine diphosphate biosynthesis; thiamine phosphate from 4-amino-2-methyl-5-diphosphomethylpyrimidine and 4-methyl-5-(2-phosphoethyl)-thiazole: step 1/1. Functionally, condenses 4-methyl-5-(beta-hydroxyethyl)thiazole monophosphate (THZ-P) and 2-methyl-4-amino-5-hydroxymethyl pyrimidine pyrophosphate (HMP-PP) to form thiamine monophosphate (TMP). In Clostridium tetani (strain Massachusetts / E88), this protein is Thiamine-phosphate synthase.